The following is a 324-amino-acid chain: dITP/XTP pyrophosphatase (324 aa).

Residues 1-127 (MTKTIFESKT…KNDNNFGDTI (127 aa)) are unknown. The tract at residues 128–324 (LIATHNEGKT…EVFPKWQLEN (197 aa)) is NTP pyrophosphatase. Residue 131–136 (THNEGK) participates in substrate binding. 2 residues coordinate Mg(2+): glutamate 164 and aspartate 193. Aspartate 193 functions as the Proton acceptor in the catalytic mechanism. Substrate is bound by residues serine 194, 277 to 280 (FGYD), lysine 300, and 305 to 306 (HR).

It belongs to the HAM1 NTPase family. As to quaternary structure, homodimer. Requires Mg(2+) as cofactor.

It catalyses the reaction XTP + H2O = XMP + diphosphate + H(+). The catalysed reaction is dITP + H2O = dIMP + diphosphate + H(+). It carries out the reaction ITP + H2O = IMP + diphosphate + H(+). Pyrophosphatase that catalyzes the hydrolysis of nucleoside triphosphates to their monophosphate derivatives, with a high preference for the non-canonical purine nucleotides XTP (xanthosine triphosphate), dITP (deoxyinosine triphosphate) and ITP. Seems to function as a house-cleaning enzyme that removes non-canonical purine nucleotides from the nucleotide pool, thus preventing their incorporation into DNA/RNA and avoiding chromosomal lesions. This is dITP/XTP pyrophosphatase from Streptococcus agalactiae serotype III (strain NEM316).